Reading from the N-terminus, the 358-residue chain is Protein PXR1 (358 aa).

Disordered stretches follow at residues 1–26 (MGLAAPKNRSKISNDPQNTTWANNTS) and 146–342 (EVKT…KSAT). The segment covering 11-26 (KISNDPQNTTWANNTS) has biased composition (polar residues). One can recognise a G-patch domain in the interval 25 to 79 (TSRFGHRILTSQGWQPGDSLGASDAAHAAHYTVASQSHIRVLLKDDNLGLGAKRG). 2 stretches are compositionally biased toward basic and acidic residues: residues 146–171 (EVKTETQAKVEVKSEPESDGAKEDDR) and 199–217 (SMDLRDQAKKDIAAESSKD). Over residues 218-227 (KKGKKSKKDK) the composition is skewed to basic residues. Residues 287–299 (DVEDLSSESEDES) show a composition bias toward acidic residues. Polar residues predominate over residues 300 to 315 (TPSASRPATGTSTPTV). Positions 328–339 (HSVRQKWIRSKK) are enriched in basic residues.

This sequence belongs to the PINX1 family.

The protein resides in the nucleus. It localises to the nucleolus. Its function is as follows. Involved in rRNA-processing at A0, A1 and A2 sites and negatively regulates telomerase. The polypeptide is Protein PXR1 (PXR1) (Phaeosphaeria nodorum (strain SN15 / ATCC MYA-4574 / FGSC 10173) (Glume blotch fungus)).